The primary structure comprises 149 residues: uncharacterized protein (149 aa).

A compositionally biased stretch (basic and acidic residues) spans 130-144; it reads ESNVTKENIEIKEEK. The tract at residues 130–149 is disordered; that stretch reads ESNVTKENIEIKEEKEENSE.

This is an uncharacterized protein from Methanocaldococcus jannaschii (strain ATCC 43067 / DSM 2661 / JAL-1 / JCM 10045 / NBRC 100440) (Methanococcus jannaschii).